The primary structure comprises 136 residues: MRHGKVHRKLNRTAEHRKAMFANMCAALIKHEQIVTTLPKAKELRPIVEKLVTLGKKGGLDKRRQAISEMRDLDQVRKLFGVLAPRYKDRNGGYTRIIKAGFRYGDNAPMAVIEFVDRDEDAKGKDSGPTQESEAA.

It belongs to the bacterial ribosomal protein bL17 family. In terms of assembly, part of the 50S ribosomal subunit. Contacts protein L32.

The polypeptide is Large ribosomal subunit protein bL17 (Rhodopseudomonas palustris (strain BisB5)).